The chain runs to 201 residues: MKKILTTPIKAEDLQDIRVGDVIYLTGTLVTCRDVCHRRLIELKRPIPYDLNGKAIFHAGPIVRKNGDKWEMVSVGPTTSMRMESFEREFIEQTGVKLVVGKGGMGPLTEEGCQKFKALHVIFPAGCAVLAATQVEEIEEVHWTELGMPESLWVCRGKEFGPLIVSIDTHGNNLIAENKKLFAERRDPIVEEICEHVHYIK.

The active site involves His37.

Belongs to the class-I fumarase family. Heterotetramer of two alpha and two beta subunits.

The catalysed reaction is (2R,3R)-tartrate = oxaloacetate + H2O. This Shigella boydii serotype 4 (strain Sb227) protein is L(+)-tartrate dehydratase subunit beta (ttdB).